Reading from the N-terminus, the 1382-residue chain is DNA-directed RNA polymerase subunit beta (1382 aa).

The protein belongs to the RNA polymerase beta chain family. As to quaternary structure, the RNAP catalytic core consists of 2 alpha, 1 beta, 1 beta' and 1 omega subunit. When a sigma factor is associated with the core the holoenzyme is formed, which can initiate transcription.

It carries out the reaction RNA(n) + a ribonucleoside 5'-triphosphate = RNA(n+1) + diphosphate. Its function is as follows. DNA-dependent RNA polymerase catalyzes the transcription of DNA into RNA using the four ribonucleoside triphosphates as substrates. The polypeptide is DNA-directed RNA polymerase subunit beta (Aliarcobacter butzleri (strain RM4018) (Arcobacter butzleri)).